Here is a 111-residue protein sequence, read N- to C-terminus: Large ribosomal subunit protein uL22 (111 aa).

This sequence belongs to the universal ribosomal protein uL22 family. As to quaternary structure, part of the 50S ribosomal subunit.

Functionally, this protein binds specifically to 23S rRNA; its binding is stimulated by other ribosomal proteins, e.g. L4, L17, and L20. It is important during the early stages of 50S assembly. It makes multiple contacts with different domains of the 23S rRNA in the assembled 50S subunit and ribosome. The globular domain of the protein is located near the polypeptide exit tunnel on the outside of the subunit, while an extended beta-hairpin is found that lines the wall of the exit tunnel in the center of the 70S ribosome. The polypeptide is Large ribosomal subunit protein uL22 (Chlamydia felis (strain Fe/C-56) (Chlamydophila felis)).